Consider the following 149-residue polypeptide: Calmodulin (149 aa).

A2 is subject to N-acetylalanine. EF-hand domains are found at residues 8–43 (EQIA…LGQN), 44–79 (PTEA…KMKD), 81–116 (DSEE…LGEK), and 117–149 (LTDE…MTTK). 14 residues coordinate Ca(2+): D21, D23, D25, T27, E32, D57, D59, N61, T63, E68, D94, D96, N98, and E105. Position 116 is an N6,N6,N6-trimethyllysine (K116). Ca(2+) is bound by residues D130, D132, D134, Q136, and E141.

It belongs to the calmodulin family. As to quaternary structure, interacts (in the presence of Ca(2+)) with pde-1, madf-3, rpl-7A, tax-6, efk-1, npp-1, obr-4, sos-1, akt-1, unc-13, tag-196, ugt-48, nmy-2, F27D4.4, ddx-23, efa-6 and R11H6.4.

Functionally, calmodulin mediates the control of a large number of enzymes, ion channels and other proteins by Ca(2+). Among the enzymes to be stimulated by the calmodulin-Ca(2+) complex are a number of protein kinases and phosphatases. This is Calmodulin (cmd-1) from Caenorhabditis elegans.